The chain runs to 635 residues: Glutamyl-tRNA(Gln) amidotransferase subunit E (635 aa).

The tract at residues L415 to D437 is disordered.

Belongs to the GatB/GatE family. GatE subfamily. In terms of assembly, heterodimer of GatD and GatE.

It catalyses the reaction L-glutamyl-tRNA(Gln) + L-glutamine + ATP + H2O = L-glutaminyl-tRNA(Gln) + L-glutamate + ADP + phosphate + H(+). Allows the formation of correctly charged Gln-tRNA(Gln) through the transamidation of misacylated Glu-tRNA(Gln) in organisms which lack glutaminyl-tRNA synthetase. The reaction takes place in the presence of glutamine and ATP through an activated gamma-phospho-Glu-tRNA(Gln). The GatDE system is specific for glutamate and does not act on aspartate. This is Glutamyl-tRNA(Gln) amidotransferase subunit E from Pyrococcus horikoshii (strain ATCC 700860 / DSM 12428 / JCM 9974 / NBRC 100139 / OT-3).